Consider the following 121-residue polypeptide: RAAVAADRGIIGGYGLGAPYGLAGGYGLEVPYGLAGYADYRYPAGACGIDAYGGIGEGNVAVAGELPVAGTTAVAGQVPIMGAVKFGGDVCAAGSVSIAGKCACGCGDYGYGYGLGAPYLY.

Belongs to the chorion protein family.

In terms of biological role, this protein is one of many from the eggshell of the gypsy moth. In Lymantria dispar (Gypsy moth), this protein is Chorion class A proteins Ld9.